We begin with the raw amino-acid sequence, 248 residues long: ATP synthase subunit a, chloroplastic (248 aa).

The next 5 membrane-spanning stretches (helical) occupy residues 38–58 (QVLI…AIAV), 96–116 (VPFI…GALL), 135–155 (INTT…AGLT), 200–220 (LVVV…VMFL), and 221–241 (GLFT…AYIG).

It belongs to the ATPase A chain family. F-type ATPases have 2 components, CF(1) - the catalytic core - and CF(0) - the membrane proton channel. CF(1) has five subunits: alpha(3), beta(3), gamma(1), delta(1), epsilon(1). CF(0) has four main subunits: a, b, b' and c.

It is found in the plastid. The protein localises to the chloroplast thylakoid membrane. Key component of the proton channel; it plays a direct role in the translocation of protons across the membrane. The sequence is that of ATP synthase subunit a, chloroplastic from Nuphar advena (Common spatterdock).